Reading from the N-terminus, the 789-residue chain is Isoamylase SU1, chloroplastic (789 aa).

A chloroplast-targeting transit peptide spans 1–44; that stretch reads MAQQLPCVSSPRPLLAVPAGRWRAGVRGRPNVAGLGRGRLSLHA. The active-site Nucleophile is the Asp-417. Catalysis depends on Glu-473, which acts as the Proton donor.

This sequence belongs to the glycosyl hydrolase 13 family.

It localises to the plastid. Its subcellular location is the chloroplast. It carries out the reaction Hydrolysis of (1-&gt;6)-alpha-D-glucosidic branch linkages in glycogen, amylopectin and their beta-limit dextrins.. Its pathway is glycan biosynthesis; starch biosynthesis. Functionally, isoamylase starch-debranching enzyme involved in amylopectin biosynthesis in endosperm. Functions by removing excess branches or improper branches that interfere with the formation of double helices of the cluster chains of amylopectin and crystallization of starch. The chain is Isoamylase SU1, chloroplastic from Zea mays (Maize).